The chain runs to 493 residues: uncharacterized protein (493 aa).

8-37 is an FAD binding site; the sequence is DFLVVGGGTCGCVVAARLSEDPSATVMLLE. H429 acts as the Proton acceptor in catalysis.

This sequence belongs to the GMC oxidoreductase family. FAD is required as a cofactor.

This is an uncharacterized protein from Rhodococcus erythropolis (Arthrobacter picolinophilus).